Consider the following 457-residue polypeptide: Cysteine--tRNA ligase (457 aa).

Cys-27 contributes to the Zn(2+) binding site. The 'HIGH' region signature appears at 29–39 (PTVYDFAHIGN). Zn(2+) is bound by residues Cys-211, His-236, and Glu-240. The 'KMSKS' region motif lies at 269-273 (KMSKS). Residue Lys-272 participates in ATP binding.

This sequence belongs to the class-I aminoacyl-tRNA synthetase family. As to quaternary structure, monomer. Requires Zn(2+) as cofactor.

The protein resides in the cytoplasm. The catalysed reaction is tRNA(Cys) + L-cysteine + ATP = L-cysteinyl-tRNA(Cys) + AMP + diphosphate. The polypeptide is Cysteine--tRNA ligase (Ehrlichia ruminantium (strain Gardel)).